The sequence spans 470 residues: Methylenetetrahydrofolate--tRNA-(uracil-5-)-methyltransferase TrmFO (470 aa).

Residue 10-15 participates in FAD binding; sequence GAGLAG.

It belongs to the MnmG family. TrmFO subfamily. Requires FAD as cofactor.

The protein localises to the cytoplasm. The catalysed reaction is uridine(54) in tRNA + (6R)-5,10-methylene-5,6,7,8-tetrahydrofolate + NADH + H(+) = 5-methyluridine(54) in tRNA + (6S)-5,6,7,8-tetrahydrofolate + NAD(+). It carries out the reaction uridine(54) in tRNA + (6R)-5,10-methylene-5,6,7,8-tetrahydrofolate + NADPH + H(+) = 5-methyluridine(54) in tRNA + (6S)-5,6,7,8-tetrahydrofolate + NADP(+). Its function is as follows. Catalyzes the folate-dependent formation of 5-methyl-uridine at position 54 (M-5-U54) in all tRNAs. This chain is Methylenetetrahydrofolate--tRNA-(uracil-5-)-methyltransferase TrmFO, found in Prochlorococcus marinus (strain MIT 9312).